The following is a 206-amino-acid chain: Bacterial microcompartment protein trimer-3 (206 aa).

BMC circularly permuted domains are found at residues 2–104 (ELRA…RLAP) and 105–206 (RVVS…DNRG). The Pore gating residues signature appears at 67-68 (ER).

It belongs to the EutL/PduB family. In terms of assembly, homotrimerizes to form a pseudohexamer. These stack, with the concave faces together, with the concave faces together, in purified bacterial microcompartments (BMC).

It is found in the bacterial microcompartment. Its function is as follows. A minor component of the bacterial microcompartment (BMC) shell. Expression of 5 proteins in E.coli (BMC-H (Hoch_5815), BMC-P (Hoch_5814), and 3 BMC-T (Hoch_5812, Hoch_5816, Hoch_3341)) forms 40 nm artificial BMCs with a molecular mass of 6.5 MDa. One of 2 stacked pseudohexamers in the BMC. There are 20 BMC-T pseudohexamers per BMC, composed of mixed BMC-T1, BMC-T2 and BMC-T3. The shell facets are 20-30 Angstroms thick, with 1 of the stacked BMC-T trimers protruding to the exterior. The stacked trimers may serve as conduits to allow metabolite flux across the protein shell, gated by Arg-68 which contacts Glu-67 in an adjacent subunit; they are flexible enough to play a role in accommodating variations in shell assembly. This chain is Bacterial microcompartment protein trimer-3, found in Haliangium ochraceum (strain DSM 14365 / JCM 11303 / SMP-2).